An 81-amino-acid polypeptide reads, in one-letter code: Cytochrome b559 subunit alpha (81 aa).

Heme contacts are provided by Arg-18 and His-23. A helical membrane pass occupies residues 19-40 (YWVIHSITIPMLFIAGWLFVST).

It belongs to the PsbE/PsbF family. In terms of assembly, heterodimer of an alpha subunit and a beta subunit. PSII is composed of 1 copy each of membrane proteins PsbA, PsbB, PsbC, PsbD, PsbE, PsbF, PsbH, PsbI, PsbJ, PsbK, PsbL, PsbM, PsbT, PsbX, PsbY, PsbZ, Psb30/Ycf12, peripheral proteins PsbO, CyanoQ (PsbQ), PsbU, PsbV and a large number of cofactors. It forms dimeric complexes. Heme b is required as a cofactor.

Its subcellular location is the cellular thylakoid membrane. This b-type cytochrome is tightly associated with the reaction center of photosystem II (PSII). PSII is a light-driven water:plastoquinone oxidoreductase that uses light energy to abstract electrons from H(2)O, generating O(2) and a proton gradient subsequently used for ATP formation. It consists of a core antenna complex that captures photons, and an electron transfer chain that converts photonic excitation into a charge separation. The polypeptide is Cytochrome b559 subunit alpha (Synechocystis sp. (strain ATCC 27184 / PCC 6803 / Kazusa)).